The sequence spans 266 residues: Glutamate racemase (266 aa).

Residues aspartate 9–serine 10 and tyrosine 41–glycine 42 each bind substrate. Catalysis depends on cysteine 72, which acts as the Proton donor/acceptor. Asparagine 73 to threonine 74 serves as a coordination point for substrate. Cysteine 184 functions as the Proton donor/acceptor in the catalytic mechanism. Residue threonine 185–histidine 186 participates in substrate binding.

Belongs to the aspartate/glutamate racemases family.

It carries out the reaction L-glutamate = D-glutamate. The protein operates within cell wall biogenesis; peptidoglycan biosynthesis. Functionally, provides the (R)-glutamate required for cell wall biosynthesis. This is Glutamate racemase from Staphylococcus aureus (strain Mu3 / ATCC 700698).